The chain runs to 320 residues: Pseudouridine-5'-phosphate glycosidase (320 aa).

The active-site Proton donor is Glu25. Substrate-binding residues include Lys85 and Val105. Position 137 (Asp137) interacts with Mn(2+). 139 to 141 (SAD) contributes to the substrate binding site. Lys158 acts as the Nucleophile in catalysis.

It belongs to the pseudouridine-5'-phosphate glycosidase family. Homotrimer. Mn(2+) serves as cofactor.

The enzyme catalyses D-ribose 5-phosphate + uracil = psi-UMP + H2O. Functionally, catalyzes the reversible cleavage of pseudouridine 5'-phosphate (PsiMP) to ribose 5-phosphate and uracil. Functions biologically in the cleavage direction, as part of a pseudouridine degradation pathway. In Rhodospirillum centenum (strain ATCC 51521 / SW), this protein is Pseudouridine-5'-phosphate glycosidase.